The sequence spans 378 residues: Flap endonuclease 1 (378 aa).

Residues 1-104 are N-domain; sequence MGVKDLSKVI…SELEKRTERR (104 aa). Aspartate 34 is a binding site for Mg(2+). DNA contacts are provided by arginine 47 and arginine 70. Aspartate 86 serves as a coordination point for Mg(2+). Residues 90 to 113 are disordered; sequence PQMKTSELEKRTERRTEAEKQRND. Residues 95-113 are compositionally biased toward basic and acidic residues; that stretch reads SELEKRTERRTEAEKQRND. The I-domain stretch occupies residues 122–253; sequence SVNKFEKRLV…KKAFELIKKY (132 aa). Glutamate 158, glutamate 160, aspartate 179, and aspartate 181 together coordinate Mg(2+). Glutamate 158 lines the DNA pocket. Positions 231 and 233 each coordinate DNA. Aspartate 233 lines the Mg(2+) pocket. Residues 336-344 form an interaction with PCNA region; it reads QQARIDSFF. The interval 348 to 378 is disordered; the sequence is KVVTSETTKRKNEEKNNLKKRGPSLGKKAKK. The span at 354–364 shows a compositional bias: basic and acidic residues; sequence TTKRKNEEKNN. Residues 365–378 are compositionally biased toward basic residues; sequence LKKRGPSLGKKAKK.

The protein belongs to the XPG/RAD2 endonuclease family. FEN1 subfamily. Interacts with PCNA. Three molecules of FEN1 bind to one PCNA trimer with each molecule binding to one PCNA monomer. PCNA stimulates the nuclease activity without altering cleavage specificity. Requires Mg(2+) as cofactor. Post-translationally, phosphorylated. Phosphorylation upon DNA damage induces relocalization to the nuclear plasma.

The protein resides in the nucleus. Its subcellular location is the nucleolus. It is found in the nucleoplasm. It localises to the mitochondrion. Structure-specific nuclease with 5'-flap endonuclease and 5'-3' exonuclease activities involved in DNA replication and repair. During DNA replication, cleaves the 5'-overhanging flap structure that is generated by displacement synthesis when DNA polymerase encounters the 5'-end of a downstream Okazaki fragment. It enters the flap from the 5'-end and then tracks to cleave the flap base, leaving a nick for ligation. Also involved in the long patch base excision repair (LP-BER) pathway, by cleaving within the apurinic/apyrimidinic (AP) site-terminated flap. Acts as a genome stabilization factor that prevents flaps from equilibrating into structures that lead to duplications and deletions. Also possesses 5'-3' exonuclease activity on nicked or gapped double-stranded DNA, and exhibits RNase H activity. Also involved in replication and repair of rDNA and in repairing mitochondrial DNA. In Brugia malayi (Filarial nematode worm), this protein is Flap endonuclease 1.